Here is a 415-residue protein sequence, read N- to C-terminus: Dynein assembly factor with WD repeat domains 1 (415 aa).

WD repeat units follow at residues 90–129, 132–174, 175–214, 217–256, 259–298, 301–340, 343–384, and 386–415; these read AHIL…ELHT, GHRN…HTFR, GHTA…EVVT, GHLA…KVHT, GHCA…CVAT, GHDD…CITK, GHEG…QVLE, and HTDE…RIWR.

It belongs to the WD repeat WDR69 family. In terms of assembly, interacts with IFT46.

It is found in the cytoplasm. It localises to the cytoskeleton. Its subcellular location is the flagellum basal body. The protein localises to the flagellum axoneme. In terms of biological role, required for axonemal dynein assembly and ciliary motility in ciliated organs, including Kupffer's vesicle, during embryogenesis. Facilitates the onset of robust cilia motility during development. The polypeptide is Dynein assembly factor with WD repeat domains 1 (Daw1) (Rattus norvegicus (Rat)).